Here is a 351-residue protein sequence, read N- to C-terminus: Paired box protein 2 homolog (351 aa).

Residues 91–217 constitute a DNA-binding region (paired); sequence SHTGVNQLGG…SSINRIVRNK (127 aa). The interval 94-150 is PAI subdomain; it reads GVNQLGGVFVNGRPLPDTIRAQIVEMSQHGTRPCDISRQLKVSHGCVSKILGRYYST. Residues 169–217 are RED subdomain; sequence RVVECIAGYKRANPTMFAWEIRQKLIEDQICGEENVPSVSSINRIVRNK. Polar residues predominate over residues 226 to 246; it reads PTSVTPSVARPSSATSQNQRS. The segment at 226 to 258 is disordered; it reads PTSVTPSVARPSSATSQNQRSPPRGVQQHMQQS.

It is found in the nucleus. The protein localises to the chromosome. Functionally, transcription factor. Involved in negatively modulating apoptosis in germline and somatic cells, acting in partial redundancy with transcription factor egl-38/PAX5, probably by directly regulating transcription of apoptosis regulator ced-9. May bind to the DNA sequence motif 5'-GTAACG-3' in regulatory elements. This is Paired box protein 2 homolog from Caenorhabditis elegans.